A 686-amino-acid polypeptide reads, in one-letter code: Disintegrin and metalloproteinase domain-containing protein 17 homolog (686 aa).

The N-terminal stretch at Met1–Ala21 is a signal peptide. A propeptide spanning residues Phe22–Arg177 is cleaved from the precursor. N-linked (GlcNAc...) asparagine glycosylation is found at Asn59, Asn206, and Asn262. The Extracellular portion of the chain corresponds to Arg178–Thr637. A Peptidase M12B domain is found at Asn187–Met445. Disulfide bonds link Cys328-Cys440 and Cys394-Cys424. His370 contributes to the Zn(2+) binding site. Residue Glu371 is part of the active site. His374 and His380 together coordinate Zn(2+). Residues Thr446–Asp535 form the Disintegrin domain. Asn501 carries an N-linked (GlcNAc...) asparagine glycan. A disulfide bridge links Cys506 with Cys527. The N-linked (GlcNAc...) asparagine glycan is linked to Asn581. The helical transmembrane segment at His638–Val658 threads the bilayer. Residues Lys659–Asn686 are Cytoplasmic-facing.

Zn(2+) serves as cofactor.

The protein localises to the cell membrane. Metalloprotease. Acts together with protease sup-17 to facilitate lin-12/Notch signaling during developmental cell fate decision, including anchor cell/ventral uterine precursor cell decision. By modulating glp-1/Notch signaling, plays a role in germline development. This Caenorhabditis elegans protein is Disintegrin and metalloproteinase domain-containing protein 17 homolog.